The sequence spans 488 residues: Katanin p60 ATPase-containing subunit A-like 1 (488 aa).

The segment at 84–184 is disordered; sequence FPNPVPEEGP…EQKKFDGTGY (101 aa). Residues 144 to 167 show a composition bias toward basic and acidic residues; the sequence is KPDRPNTRDGRGNKAKEEKSKRNA. Residue 246–253 coordinates ATP; it reads GPPGTGKT.

It belongs to the AAA ATPase family. Katanin p60 subunit A1 subfamily. A-like 1 sub-subfamily.

The protein resides in the cytoplasm. The protein localises to the cytoskeleton. It is found in the spindle pole. It localises to the spindle. It carries out the reaction n ATP + n H2O + a microtubule = n ADP + n phosphate + (n+1) alpha/beta tubulin heterodimers.. Regulates microtubule dynamics in Sertoli cells, a process that is essential for spermiogenesis and male fertility. Severs microtubules in an ATP-dependent manner, promoting rapid reorganization of cellular microtubule arrays. The protein is Katanin p60 ATPase-containing subunit A-like 1 (katnal1) of Danio rerio (Zebrafish).